The primary structure comprises 281 residues: 2-dehydro-3-deoxyphosphooctonate aldolase (281 aa).

The protein belongs to the KdsA family.

It localises to the cytoplasm. It catalyses the reaction D-arabinose 5-phosphate + phosphoenolpyruvate + H2O = 3-deoxy-alpha-D-manno-2-octulosonate-8-phosphate + phosphate. It functions in the pathway carbohydrate biosynthesis; 3-deoxy-D-manno-octulosonate biosynthesis; 3-deoxy-D-manno-octulosonate from D-ribulose 5-phosphate: step 2/3. Its pathway is bacterial outer membrane biogenesis; lipopolysaccharide biosynthesis. The polypeptide is 2-dehydro-3-deoxyphosphooctonate aldolase (Hahella chejuensis (strain KCTC 2396)).